Consider the following 96-residue polypeptide: HIG1 domain family member 1C (96 aa).

Topologically, residues 1-26 (MSSDEWSAAEDEGQLSRLLRKSRDSP) are cytoplasmic. Residues 1 to 91 (MSSDEWSAAE…YKDYIRPRFF (91 aa)) form the HIG1 domain. The helical transmembrane segment at 27 to 44 (FVPVGMAGFVAVLSYGLY) threads the bilayer. The Extracellular portion of the chain corresponds to 45 to 58 (KLNSRREQKMSLHL). Residues 59 to 81 (IHVRVAAQGCVVGAVTLGVLYSM) traverse the membrane as a helical segment. Over 82 to 96 (YKDYIRPRFFNVPKK) the chain is Cytoplasmic.

The protein resides in the membrane. This Mus musculus (Mouse) protein is HIG1 domain family member 1C (Higd1c).